Consider the following 393-residue polypeptide: Protein TsgA (393 aa).

12 consecutive transmembrane segments (helical) span residues 11 to 31, 51 to 71, 78 to 98, 101 to 121, 134 to 154, 162 to 182, 206 to 226, 245 to 265, 273 to 293, 297 to 317, 332 to 352, and 361 to 381; these read WISFLSYALTGALVIVTGMVM, FLNAGILISIFLNAWLMEIVP, FGFLLMVLAVAGLMFSHSLAL, AAMFILGVVSGITMSIGTFLI, LLFTDSFFSMAGMIFPMIAAF, WYWVYACIGLVYVAIFILTFG, IGVLFLSIAALCYILGQLGFI, TLVSNFWMSYMVGMWAFSFIL, ILTVLAGLAAILMYVFNTGTP, AWSILALGFFSSAIYTTIITL, FVLTCGTIGTMLTFVVTGPIV, and LLTANGLYAVVFVMCFLLGFV.

The protein belongs to the major facilitator superfamily. TsgA family.

The protein localises to the cell inner membrane. This chain is Protein TsgA, found in Escherichia coli O7:K1 (strain IAI39 / ExPEC).